The chain runs to 537 residues: Exodeoxyribonuclease 7 large subunit (537 aa).

A disordered region spans residues glycine 508–aspartate 537.

Belongs to the XseA family. Heterooligomer composed of large and small subunits.

The protein localises to the cytoplasm. The enzyme catalyses Exonucleolytic cleavage in either 5'- to 3'- or 3'- to 5'-direction to yield nucleoside 5'-phosphates.. Functionally, bidirectionally degrades single-stranded DNA into large acid-insoluble oligonucleotides, which are then degraded further into small acid-soluble oligonucleotides. The sequence is that of Exodeoxyribonuclease 7 large subunit from Azorhizobium caulinodans (strain ATCC 43989 / DSM 5975 / JCM 20966 / LMG 6465 / NBRC 14845 / NCIMB 13405 / ORS 571).